The sequence spans 352 residues: Uroporphyrinogen decarboxylase (352 aa).

Residues 26 to 30 (RQAGR), aspartate 76, tyrosine 153, serine 208, and histidine 323 contribute to the substrate site.

The protein belongs to the uroporphyrinogen decarboxylase family. In terms of assembly, homodimer.

Its subcellular location is the cytoplasm. It carries out the reaction uroporphyrinogen III + 4 H(+) = coproporphyrinogen III + 4 CO2. It functions in the pathway porphyrin-containing compound metabolism; protoporphyrin-IX biosynthesis; coproporphyrinogen-III from 5-aminolevulinate: step 4/4. In terms of biological role, catalyzes the decarboxylation of four acetate groups of uroporphyrinogen-III to yield coproporphyrinogen-III. This is Uroporphyrinogen decarboxylase from Prochlorococcus marinus (strain MIT 9303).